A 32-amino-acid polypeptide reads, in one-letter code: Photosystem II reaction center protein T (32 aa).

A helical membrane pass occupies residues 3 to 23 (TLVYTFLLIGTLAVLFAAVFF).

This sequence belongs to the PsbT family. In terms of assembly, PSII is composed of 1 copy each of membrane proteins PsbA, PsbB, PsbC, PsbD, PsbE, PsbF, PsbH, PsbI, PsbJ, PsbK, PsbL, PsbM, PsbT, PsbX, PsbY, PsbZ, Psb30/Ycf12, at least 3 peripheral proteins of the oxygen-evolving complex and a large number of cofactors. It forms dimeric complexes.

The protein localises to the plastid. It is found in the chloroplast thylakoid membrane. Its function is as follows. Found at the monomer-monomer interface of the photosystem II (PS II) dimer, plays a role in assembly and dimerization of PSII. PSII is a light-driven water plastoquinone oxidoreductase, using light energy to abstract electrons from H(2)O, generating a proton gradient subsequently used for ATP formation. The chain is Photosystem II reaction center protein T from Guillardia theta (Cryptophyte).